Consider the following 191-residue polypeptide: Small ribosomal subunit protein uS7 (191 aa).

Residues 56 to 80 form a disordered region; sequence NKSGEQGDGDGESGGKAGGIKKRSL.

This sequence belongs to the universal ribosomal protein uS7 family. Part of the 30S ribosomal subunit. Contacts proteins S9 and S11.

One of the primary rRNA binding proteins, it binds directly to 16S rRNA where it nucleates assembly of the head domain of the 30S subunit. Is located at the subunit interface close to the decoding center, probably blocks exit of the E-site tRNA. This Coxiella burnetii (strain RSA 493 / Nine Mile phase I) protein is Small ribosomal subunit protein uS7.